A 247-amino-acid chain; its full sequence is MTRFALTLEFDGTPFMGLQRQKHGPSVQQAVEEAARATLNQDITLHSAGRTDTGVHALGMRSHFDAETDLTPFRLMGGLNAHLRPHPIAVTNCEIMPEDWHARFACIGRSYVYRIINRRAPLTIDRKRAWQVPQQLDHEAMQRAAQLLVGTHDFTTFRSTQCQAKDPVKSLDRLEVERDGDEIRVHAEARSFLHHQVRSMVGCLKLVGQGTWREEEVEEALLARDRQRLGLNAPPHGLYFVAAEYPR.

Asp52 (nucleophile) is an active-site residue. Residue Tyr111 participates in substrate binding.

It belongs to the tRNA pseudouridine synthase TruA family. In terms of assembly, homodimer.

The catalysed reaction is uridine(38/39/40) in tRNA = pseudouridine(38/39/40) in tRNA. In terms of biological role, formation of pseudouridine at positions 38, 39 and 40 in the anticodon stem and loop of transfer RNAs. This chain is tRNA pseudouridine synthase A, found in Erythrobacter litoralis (strain HTCC2594).